We begin with the raw amino-acid sequence, 118 residues long: MSEFSPIFIYLVMSLLVSLILLGLPFLFASNSSTYPEKLSAYECGFDPFGDARSRFDIRFYLVSILFIIFDLEVTFFFPWAVSLNKIDLFGFWSMMAFLLILTIGFLYEWKRGALDWE.

The next 3 membrane-spanning stretches (helical) occupy residues 7 to 27, 62 to 82, and 87 to 107; these read IFIY…LPFL, LVSI…PWAV, and IDLF…IGFL.

This sequence belongs to the complex I subunit 3 family.

It is found in the mitochondrion membrane. The catalysed reaction is a ubiquinone + NADH + 5 H(+)(in) = a ubiquinol + NAD(+) + 4 H(+)(out). Core subunit of the mitochondrial membrane respiratory chain NADH dehydrogenase (Complex I) that is believed to belong to the minimal assembly required for catalysis. Complex I functions in the transfer of electrons from NADH to the respiratory chain. The immediate electron acceptor for the enzyme is believed to be ubiquinone. This Allium cepa (Onion) protein is NADH-ubiquinone oxidoreductase chain 3 (ND3).